The following is a 377-amino-acid chain: Pulmonary surfactant-associated protein B (377 aa).

Positions 1–22 are cleaved as a signal peptide; it reads MAKSHLLQWLLLLPTLCCPGAA. A propeptide spanning residues 23–191 is cleaved from the precursor; the sequence is ITSASSLECA…PHTQDFSEQQ (169 aa). One can recognise a Saposin A-type domain in the interval 24-64; sequence TSASSLECAQGPQFWCQSLEHAVQCRALGHCLQEVWGHAGA. Saposin B-type domains follow at residues 64–146, 195–272, and 291–366; these read ANDL…PRGQ, PLPF…STED, and QDTE…EAPA. 9 cysteine pairs are disulfide-bonded: cysteine 68-cysteine 142, cysteine 71-cysteine 136, cysteine 99-cysteine 111, cysteine 199-cysteine 268, cysteine 202-cysteine 262, cysteine 226-cysteine 237, cysteine 295-cysteine 362, cysteine 298-cysteine 356, and cysteine 321-cysteine 331. Positions 271–377 are excised as a propeptide; that stretch reads EDAMGPALPA…PLQCFQTPHL (107 aa). An N-linked (GlcNAc...) asparagine glycan is attached at asparagine 307.

In terms of assembly, homodimer; disulfide-linked.

Its subcellular location is the secreted. It is found in the extracellular space. The protein localises to the surface film. Its function is as follows. Pulmonary surfactant-associated proteins promote alveolar stability by lowering the surface tension at the air-liquid interface in the peripheral air spaces. SP-B increases the collapse pressure of palmitic acid to nearly 70 millinewtons per meter. The sequence is that of Pulmonary surfactant-associated protein B (Sftpb) from Mus musculus (Mouse).